The following is a 199-amino-acid chain: dITP/XTP pyrophosphatase (199 aa).

7 to 12 (TGNAGK) is a binding site for substrate. Mg(2+) is bound by residues E37 and D66. Catalysis depends on D66, which acts as the Proton acceptor. Residues S67, 146–149 (FGYD), K169, and 174–175 (HR) contribute to the substrate site.

The protein belongs to the HAM1 NTPase family. In terms of assembly, homodimer. Requires Mg(2+) as cofactor.

The enzyme catalyses XTP + H2O = XMP + diphosphate + H(+). It catalyses the reaction dITP + H2O = dIMP + diphosphate + H(+). It carries out the reaction ITP + H2O = IMP + diphosphate + H(+). In terms of biological role, pyrophosphatase that catalyzes the hydrolysis of nucleoside triphosphates to their monophosphate derivatives, with a high preference for the non-canonical purine nucleotides XTP (xanthosine triphosphate), dITP (deoxyinosine triphosphate) and ITP. Seems to function as a house-cleaning enzyme that removes non-canonical purine nucleotides from the nucleotide pool, thus preventing their incorporation into DNA/RNA and avoiding chromosomal lesions. In Deinococcus geothermalis (strain DSM 11300 / CIP 105573 / AG-3a), this protein is dITP/XTP pyrophosphatase.